The chain runs to 480 residues: CASP8 and FADD-like apoptosis regulator (480 aa).

DED domains follow at residues 1–73 (MSAE…RILK) and 92–170 (DYRV…KIQK). Residues 1–195 (MSAEVIHQVE…LQAAIQKSFK (195 aa)) form an interaction with CASP8 region. The interval 1–227 (MSAEVIHQVE…GTQQEPVKKS (227 aa)) is interaction with FADD. The interval 1 to 305 (MSAEVIHQVE…FACMPEHRDY (305 aa)) is interaction with CASP8 propeptide. Residues 1–435 (MSAEVIHQVE…CLSQKLRQER (435 aa)) are not proteolytically processed and involved in apoptosis inhibition. The interval 192–435 (KSFKDPSNNF…CLSQKLRQER (244 aa)) is interaction with CASP3. Positions 192 to 480 (KSFKDPSNNF…LRKKLIPSYT (289 aa)) are interaction with TRAF1 and TRAF2. An interaction with CASP8 subunits p18 and p10 region spans residues 217–480 (LGTQQEPVKK…LRKKLIPSYT (264 aa)). Residues 263 to 358 (ETELLRDTFT…AGKPKIFFIQ (96 aa)) form a caspase region. The interaction with CASP8 stretch occupies residues 370–480 (SSLLEVDGPA…LRKKLIPSYT (111 aa)).

It belongs to the peptidase C14A family. In terms of assembly, TNFRSF6 stimulation triggers recruitment to the death-inducing signaling complex (DISC) formed by TNFRSF6, FADD and CASP8. A proteolytic fragment (p43) stays associated with the DISC. Interacts with RIPK1. Proteolytically processed by CASP8 generating subunit p43 and p12.

Apoptosis regulator protein which may function as a crucial link between cell survival and cell death pathways in mammalian cells. Acts as an inhibitor of TNFRSF6 mediated apoptosis. A proteolytic fragment (p43) is likely retained in the death-inducing signaling complex (DISC) thereby blocking further recruitment and processing of caspase-8 at the complex. Full length and shorter isoforms have been shown either to induce apoptosis or to reduce TNFRSF-triggered apoptosis. Lacks enzymatic (caspase) activity. The protein is CASP8 and FADD-like apoptosis regulator (CFLAR) of Pongo abelii (Sumatran orangutan).